We begin with the raw amino-acid sequence, 316 residues long: Methionyl-tRNA formyltransferase (316 aa).

110-113 (SLLP) provides a ligand contact to (6S)-5,6,7,8-tetrahydrofolate.

It belongs to the Fmt family.

The enzyme catalyses L-methionyl-tRNA(fMet) + (6R)-10-formyltetrahydrofolate = N-formyl-L-methionyl-tRNA(fMet) + (6S)-5,6,7,8-tetrahydrofolate + H(+). In terms of biological role, attaches a formyl group to the free amino group of methionyl-tRNA(fMet). The formyl group appears to play a dual role in the initiator identity of N-formylmethionyl-tRNA by promoting its recognition by IF2 and preventing the misappropriation of this tRNA by the elongation apparatus. This Halothermothrix orenii (strain H 168 / OCM 544 / DSM 9562) protein is Methionyl-tRNA formyltransferase.